We begin with the raw amino-acid sequence, 493 residues long: Amphoterin-induced protein 1 (493 aa).

Residues 1–27 form the signal peptide; that stretch reads MQPQRDLRGLWLLLLSLFLLLFEVARA. Positions 28-61 constitute an LRRNT domain; the sequence is GRPVVSCPANCLCASNILSCSKQQLPNVPQSLPG. Topologically, residues 28 to 372 are extracellular; that stretch reads GRPVVSCPAN…LHGHHDTLNT (345 aa). 2 disulfide bridges follow: Cys-34–Cys-40 and Cys-38–Cys-47. LRR repeat units lie at residues 62 to 83, 87 to 108, 111 to 132, 135 to 156, 159 to 179, and 186 to 206; these read YTAL…WTPT, NLHS…AFVP, NLRY…LFSG, ALEV…AFED, QLQK…ELIK, and KLTL…TDLQ. The N-linked (GlcNAc...) asparagine glycan is linked to Asn-72. One can recognise an LRRCT domain in the interval 221–272; the sequence is NPLECDCKLYQLFSHWQYRQLSSVMDFQEDLYCVHSKKLHNVFSLDFFNCSE. Disulfide bonds link Cys-225/Cys-253, Cys-227/Cys-270, and Cys-290/Cys-341. 4 N-linked (GlcNAc...) asparagine glycosylation sites follow: Asn-269, Asn-315, Asn-349, and Asn-360. An Ig-like C2-type domain is found at 269–353; the sequence is NCSEYKESAW…MGETFNETLS (85 aa). A helical transmembrane segment spans residues 373–393; that stretch reads AYTTLVGCILSVVLVLIYLYL. Residues 394–493 lie on the Cytoplasmic side of the membrane; that stretch reads TPCRCWCRGV…SVFSDTPIVV (100 aa). The interval 405–493 is disordered; the sequence is KPSSHQGDSL…SVFSDTPIVV (89 aa). Over residues 408–424 the composition is skewed to polar residues; the sequence is SHQGDSLSSSMLSTTPN. Over residues 431-442 the composition is skewed to basic and acidic residues; the sequence is GDKDDGFDRRVA. Phosphoserine is present on residues Ser-477 and Ser-481.

It belongs to the immunoglobulin superfamily. AMIGO family. As to quaternary structure, homodimer, and heterodimer with AMIGO2 and AMIGO3. Interacts with KCNB1.

The protein localises to the cell membrane. It is found in the perikaryon. Its subcellular location is the cell projection. The protein resides in the dendrite. It localises to the axon. Promotes growth and fasciculation of neurites from cultured hippocampal neurons. May be involved in fasciculation as well as myelination of developing neural axons. May have a role in regeneration as well as neural plasticity in the adult nervous system. May mediate homophilic as well as heterophilic cell-cell interaction and contribute to signal transduction through its intracellular domain. Assembled with KCNB1 modulates the gating characteristics of the delayed rectifier voltage-dependent potassium channel KCNB1. This Rattus norvegicus (Rat) protein is Amphoterin-induced protein 1.